The following is a 363-amino-acid chain: Phosphoribosylformylglycinamidine cyclo-ligase (363 aa).

This sequence belongs to the AIR synthase family.

It localises to the cytoplasm. It carries out the reaction 2-formamido-N(1)-(5-O-phospho-beta-D-ribosyl)acetamidine + ATP = 5-amino-1-(5-phospho-beta-D-ribosyl)imidazole + ADP + phosphate + H(+). The protein operates within purine metabolism; IMP biosynthesis via de novo pathway; 5-amino-1-(5-phospho-D-ribosyl)imidazole from N(2)-formyl-N(1)-(5-phospho-D-ribosyl)glycinamide: step 2/2. This is Phosphoribosylformylglycinamidine cyclo-ligase from Brucella anthropi (strain ATCC 49188 / DSM 6882 / CCUG 24695 / JCM 21032 / LMG 3331 / NBRC 15819 / NCTC 12168 / Alc 37) (Ochrobactrum anthropi).